The primary structure comprises 119 residues: uncharacterized protein (119 aa).

A run of 4 helical transmembrane segments spans residues 3–23, 29–49, 58–78, and 87–107; these read WVFL…MKLS, LIPS…LTLT, AYAV…FLFF, and VISI…EHVA.

Belongs to the drug/metabolite transporter (DMT) superfamily. Small multidrug resistance (SMR) (TC 2.A.7.1) family.

The protein localises to the cell membrane. This is an uncharacterized protein from Bacillus subtilis (strain 168).